The chain runs to 79 residues: Conotoxin PnMSGL-03 (79 aa).

Positions 1–20 (MSRLGIMVLTLLLLVFIVTS) are cleaved as a signal peptide. Positions 21–44 (HQDAGEKQATQRDAINFRWRRSLI) are excised as a propeptide. 3 cysteine pairs are disulfide-bonded: cysteine 52–cysteine 64, cysteine 56–cysteine 73, and cysteine 63–cysteine 77. Leucine amide is present on leucine 78.

This sequence belongs to the conotoxin O3 superfamily. In terms of tissue distribution, expressed by the venom duct.

It is found in the secreted. In Conus pennaceus (Feathered cone), this protein is Conotoxin PnMSGL-03.